Here is a 395-residue protein sequence, read N- to C-terminus: Multiple organellar RNA editing factor 8, chloroplastic/mitochondrial (395 aa).

Residues 1–56 (MATHTISRSILCRPAKSLSFLFTRSFASSAPLAKSPASSLLSRSRPLVAAFSSVFR) constitute a chloroplast and mitochondrion transit peptide. The span at 211-236 (ANERNRRNDRPRNNDRSRNFERRREN) shows a compositional bias: basic and acidic residues. The interval 211–395 (ANERNRRNDR…RDGSGNPYQG (185 aa)) is disordered. Over residues 240 to 300 (GPPPQRPPMG…GPRHPPPYGA (61 aa)) the composition is skewed to pro residues. Low complexity predominate over residues 313 to 334 (QNYGGTPPPNYGGAPPANNMGG). Over residues 335-355 (APPPNYGGGPPPQYGAVPPPQ) the composition is skewed to pro residues. Positions 356–385 (YGGAPPQNNNYQQQGSGMQQPQYQNNYPPN) are enriched in low complexity.

This sequence belongs to the MORF family. As to quaternary structure, interacts with protoporphyrinogen oxidase 1 PPOX1. Interacts with PCMP-H52/MEF10. Homodimer and heterodimers with MORF1/RIP8, MORF2/RIP2, MORF3/RIP3, MORF4/RIP4, MORF5/RIP5, MORF6/RIP6 and MORF7/RIP7. Interacts with RBG3/ORRM3. Interacts with PCMP-A2/PMD1. Interacts with ORRM1 and VAT3/OZ1. Interacts with PCMP-H13/MEF35. Interacts with RBG5/ORRM4. Interacts with ORRM6.

The protein resides in the mitochondrion. Its subcellular location is the plastid. It localises to the chloroplast. Its function is as follows. Involved in organellar RNA editing. Required for the processing of numerous RNA editing sites in mitochondria and plastids. Binds to the plastid RARE1 factor, a pentatricopeptide repeat-containing protein involved in RNA editing. This Arabidopsis thaliana (Mouse-ear cress) protein is Multiple organellar RNA editing factor 8, chloroplastic/mitochondrial.